Here is a 351-residue protein sequence, read N- to C-terminus: Selenide, water dikinase (351 aa).

The active site involves U15. A non-standard amino acid (selenocysteine) is located at residue U15. ATP is bound by residues K18 and 47-49 (DNE). Residue D50 participates in Mg(2+) binding. ATP contacts are provided by residues D67, D90, and 138–140 (GHS). D90 provides a ligand contact to Mg(2+). D227 is a Mg(2+) binding site.

This sequence belongs to the selenophosphate synthase 1 family. Class I subfamily. In terms of assembly, homodimer. It depends on Mg(2+) as a cofactor.

The enzyme catalyses hydrogenselenide + ATP + H2O = selenophosphate + AMP + phosphate + 2 H(+). Functionally, synthesizes selenophosphate from selenide and ATP. The protein is Selenide, water dikinase of Nitratidesulfovibrio vulgaris (strain ATCC 29579 / DSM 644 / CCUG 34227 / NCIMB 8303 / VKM B-1760 / Hildenborough) (Desulfovibrio vulgaris).